The sequence spans 693 residues: Elongation factor G (693 aa).

A tr-type G domain is found at 8 to 282 (EKFRNFGIMA…AVVDYLPSPI (275 aa)). GTP-binding positions include 17 to 24 (AHIDAGKT), 81 to 85 (DTPGH), and 135 to 138 (NKMD).

This sequence belongs to the TRAFAC class translation factor GTPase superfamily. Classic translation factor GTPase family. EF-G/EF-2 subfamily.

It is found in the cytoplasm. Its function is as follows. Catalyzes the GTP-dependent ribosomal translocation step during translation elongation. During this step, the ribosome changes from the pre-translocational (PRE) to the post-translocational (POST) state as the newly formed A-site-bound peptidyl-tRNA and P-site-bound deacylated tRNA move to the P and E sites, respectively. Catalyzes the coordinated movement of the two tRNA molecules, the mRNA and conformational changes in the ribosome. The protein is Elongation factor G of Mycoplasmoides gallisepticum (strain R(low / passage 15 / clone 2)) (Mycoplasma gallisepticum).